Here is a 787-residue protein sequence, read N- to C-terminus: LPS-assembly protein LptD (787 aa).

Residues M1–G78 are disordered. Residues L59–G78 are compositionally biased toward low complexity.

This sequence belongs to the LptD family. As to quaternary structure, component of the lipopolysaccharide transport and assembly complex. Interacts with LptE and LptA.

In terms of biological role, together with LptE, is involved in the assembly of lipopolysaccharide (LPS) at the surface of the outer membrane. This Aromatoleum aromaticum (strain DSM 19018 / LMG 30748 / EbN1) (Azoarcus sp. (strain EbN1)) protein is LPS-assembly protein LptD.